A 680-amino-acid polypeptide reads, in one-letter code: MSARATRPRSRRGRHPLPGELDPVAESSEEVDTTNGSFETKPELLQEHLGPSLQGPGNRIKEDCDVGSHGVLPLSPEERREPEVEAHQALQEAPLDTGPAEITAPNVYETLKCRLSSLEAVVAAWRRHSLSFSKPVEAEDRDPGAPGSFGNEEEASGPGQQEAAHFIERNAWLRLALGTREEELARTQASLQDAQAENETLQRQVQELEDSLMQLEASPPPSMLRAGRRNSNSSSSGAERRPWAPQDSPMAHPFLQRLRSDSSTQSFGCLSTQRPSPEMYLMEDQMGQLQGNIEKLKCFNRLLLAVLQGYKGRCESLSIKLGKREAEATALHLALQYSKDCEEVYEVLLALKTAGLGAGVGATNGDLQAAEKEASRLLVKKEVAMDVKTPQPSPEGSSVDKPTPEELAAQLHGYVQHLRERWALLKIPPVLDPATAPKPTMPHAEATVQTILEIQPGPTLPQLEKSQIQQDLAATRDGLADLVLRLQLAQREKRGLELREAALRAQGPALRLLLQQLRWEQAHLMGDGSSGGSSEDPSSEEEAGEDRQQHYQGPPALLGGQMGKVWDSETVSQELSASLTRAVDLRAQLQSLRRQLEQMAQKGRTRGAQSAELNRELCKAHSALALAFREAHRKQEEQCRKLEQQMARMQAQQAEELAVLTATARALGDPGAPQPVQTFL.

Residues 1-15 show a composition bias toward basic residues; that stretch reads MSARATRPRSRRGRH. 3 disordered regions span residues 1 to 101, 135 to 162, and 217 to 250; these read MSAR…GPAE, PVEAEDRDPGAPGSFGNEEEASGPGQQE, and ASPPPSMLRAGRRNSNSSSSGAERRPWAPQDSPM. Positions 76–86 are enriched in basic and acidic residues; that stretch reads PEERREPEVEA. 3 coiled-coil regions span residues 177 to 219, 362 to 386, and 479 to 506; these read LGTR…EASP, ATNGDLQAAEKEASRLLVKKEVAMD, and LADLVLRLQLAQREKRGLELREAALRAQ. The interval 524 to 562 is disordered; that stretch reads LMGDGSSGGSSEDPSSEEEAGEDRQQHYQGPPALLGGQM. A coiled-coil region spans residues 573-661; sequence QELSASLTRA…QQAEELAVLT (89 aa).

It belongs to the MCC family. As to quaternary structure, interacts via its C-terminus with the first PDZ domain of USH1C.

This is Harmonin-binding protein USHBP1 from Rattus norvegicus (Rat).